The sequence spans 1218 residues: ABC transporter NFT1 (1218 aa).

The Extracellular portion of the chain corresponds to 1–29 (MIKNGTCPYWERDDLSECARREYIEFKFP). N4 is a glycosylation site (N-linked (GlcNAc...) asparagine). The helical transmembrane segment at 30 to 50 (LFILLTGMIYAFCKVFRAFYL) threads the bilayer. At 51-103 (RGKNHTNEAPEFEEQGNGNHEYARFSVLRLKSAWESRSFCNVNNRSTFDKFKK) the chain is on the cytoplasmic side. The chain crosses the membrane as a helical span at residues 104–124 (FIEGAFIVLQLTIHLYILSSM). Residues 125 to 130 (PMDNKK) are Extracellular-facing. The helical transmembrane segment at 131–151 (FFHQGFLVQMFLWILLLVVIT) threads the bilayer. The Cytoplasmic segment spans residues 152–169 (LRLISASQSFRWVLACKR). The helical transmembrane segment at 170–190 (DLWAVSFYSYASLFTLSILPL) threads the bilayer. Residues 191-201 (RSVFIGKIKDK) are Extracellular-facing. A helical membrane pass occupies residues 202–222 (IMVKYIISETFIDLALLLLLS). The Cytoplasmic portion of the chain corresponds to 223 to 302 (TSSIEGTRYS…SSKKGRLLPN (80 aa)). A helical membrane pass occupies residues 303-323 (IICYFKAVFISQLFLAFVSSF). Residues 311–621 (FISQLFLAFV…IASTVSLLIQ (311 aa)) form the ABC transmembrane type-1 1 domain. Topologically, residues 324-351 (LNFVPSLLMPRILSYVNDPKSKSWNLVS) are extracellular. Residues 352-374 (LYVSSMLVSKIIATTCRGQGLFL) form a helical membrane-spanning segment. The Cytoplasmic segment spans residues 375-449 (GEKGTMQLRT…VMSIDAFKVS (75 aa)). Positions 410 to 434 (NASTSFEENPDSSEAEPRKKSSRKD) are disordered. Residues 424–434 (AEPRKKSSRKD) are compositionally biased toward basic and acidic residues. Residues 450–470 (EAMNTFYLACEAVFMTVTALM) form a helical membrane-spanning segment. At 471–481 (ILYSLLGWSAF) the chain is on the extracellular side. Residues 482–504 (AGTFALLAMIPLNFWCATFYGNY) form a helical membrane-spanning segment. At 505 to 558 (QADQLILTDKRTSGISEALNSIRVIKLLAWENLFYQKIINVRDGEIRLLKKKAT) the chain is on the cytoplasmic side. Residues 559-579 (IFFLNHLIWFFGPTLVSAITF) traverse the membrane as a helical segment. The Extracellular segment spans residues 580-584 (SVFIK). The chain crosses the membrane as a helical span at residues 585 to 605 (FQNQTLTPTIAFTALSLFAIL). Residues 606 to 953 (RTPMDQIAST…KFSAYKWLAD (348 aa)) lie on the Cytoplasmic side of the membrane. One can recognise an ABC transporter domain in the interval 651–892 (FGFEDASMEW…NEFLRESINN (242 aa)). Residue 686-693 (GPTGSGKS) coordinates ATP. Residues 892-901 (NDSKNTTHNQ) are compositionally biased toward polar residues. Residues 892–926 (NDSKNTTHNQIDLKRSTTSKKTKNGDPEGGNSQDE) are disordered. Residues 954 to 974 (YFGGLGVVFVFTSSSILIHGI) form a helical membrane-spanning segment. Positions 961–1218 (VFVFTSSSIL…SSVMIIMKAS (258 aa)) constitute an ABC transmembrane type-1 2 domain. Residues 975-1013 (TLSQGFWLRYWLDTGSSGSKSTWLYRIVEGHSNIYFLLT) lie on the Extracellular side of the membrane. Residues 1014-1034 (YIIIGLVSSFLTSGKVWIAII) form a helical membrane-spanning segment. Topologically, residues 1035-1082 (SGTNVTKKIFAKLLSSILYAKLRFHNVTPTGRIMNRFSKDMDIIDQQL) are cytoplasmic. A helical transmembrane segment spans residues 1083–1105 (IPNFEGLSYSVVVCLWIILLIGY). Residues 1106 to 1109 (VTPQ) are Extracellular-facing. The chain crosses the membrane as a helical span at residues 1110-1132 (FLLFAIPLCALYYTVCTLYLRAS). Residues 1133 to 1197 (RELKRIDNIN…NMATEWITYR (65 aa)) lie on the Cytoplasmic side of the membrane. A helical membrane pass occupies residues 1198-1218 (VDIIGTLVLFSSSVMIIMKAS).

This sequence belongs to the ABC transporter superfamily. ABCC family. Conjugate transporter (TC 3.A.1.208) subfamily.

The protein localises to the membrane. The polypeptide is ABC transporter NFT1 (NFT1) (Saccharomyces cerevisiae (strain ATCC 204508 / S288c) (Baker's yeast)).